Reading from the N-terminus, the 233-residue chain is Counting factor-associated protein A (233 aa).

A signal peptide spans 1–21; the sequence is MKLLNSLILLVLTCLVSSINT. Asn-37 and Asn-189 each carry an N-linked (GlcNAc...) asparagine glycan.

It is found in the secreted. This chain is Counting factor-associated protein A (cfaA), found in Dictyostelium discoideum (Social amoeba).